A 166-amino-acid polypeptide reads, in one-letter code: MALRLEDKKAIVAEVNEAAKGALSAVVADSRGVTVGAMTVLRKAARANGVYVRVVRNTLAKRAVEGTAFECLAETFTGPTLIAFSNEHPGAAARLLKDFAKGNAKFEVKGAAFEGMFIPAVDIDRLAKLPTYDEALAQLMMTMKEASAGKFVRTLAALRDQKQEAA.

This sequence belongs to the universal ribosomal protein uL10 family. Part of the ribosomal stalk of the 50S ribosomal subunit. The N-terminus interacts with L11 and the large rRNA to form the base of the stalk. The C-terminus forms an elongated spine to which L12 dimers bind in a sequential fashion forming a multimeric L10(L12)X complex.

In terms of biological role, forms part of the ribosomal stalk, playing a central role in the interaction of the ribosome with GTP-bound translation factors. This chain is Large ribosomal subunit protein uL10, found in Shewanella denitrificans (strain OS217 / ATCC BAA-1090 / DSM 15013).